The sequence spans 320 residues: cUMP-AMP-activated phospholipase (320 aa).

The region spanning Leu-23 to Ile-204 is the PNPLA domain. A GXGXXG motif is present at residues Gly-27–Gly-32. Positions Gly-59–Gly-63 match the GXSXG motif. Ser-61 (nucleophile) is an active-site residue. Asp-191 acts as the Proton acceptor in catalysis. Positions Asp-191–Gly-193 match the DGA/G motif.

The protein belongs to the patatin family.

The catalysed reaction is a 1,2-diacyl-sn-glycero-3-phosphocholine + H2O = a 2-acyl-sn-glycero-3-phosphocholine + a fatty acid + H(+). Its activity is regulated as follows. Phospholipase activity is specifically activated upon 3',3'-cUAMP binding. Is not activated by the other cyclic dinucleotides 3',3'-cGAMP, 3',3'-c-diAMP and 3',3'-c-diGMP. Therefore, is specifically activated by only the nucleotide synthesized from its adjacently encoded nucleotidyltransferase (CdnE). Effector phospholipase of a CBASS antivirus system. CBASS (cyclic oligonucleotide-based antiphage signaling system) provides immunity against bacteriophage. The CD-NTase protein synthesizes cyclic nucleotides in response to infection; these serve as specific second messenger signals. The signals activate a diverse range of effectors, leading to bacterial cell death and thus abortive phage infection. A type II-A(UA) CBASS system. Its function is as follows. Phospholipase that is activated upon binding to the cyclic dinucleotide (CDN) second messenger 3',3'-cyclic UMP-AMP (3',3'-cUAMP). The sequence is that of cUMP-AMP-activated phospholipase from Escherichia coli.